The sequence spans 256 residues: MAVGKNKRLSKGKKGLKKKVVDPFTRKDWYDIKAPSIFETRNVGKTLVNRSQGLKNANDSLRGRIIEVSLADLNKDEEQSFRKIKLRVDEIQGRNCLTNFHGMDFTSDKLRSLVRKWQTLVEAHVDVKTTDGYLLRLFAIGFTKRRPTQVKKTTYAQTAQVRELRKKMFEIITREATSCDLKELVQKFVPEAIGREIEKASRSIYPLQNVYIRKAKILKAPKFDVSKLLELHGDSTDESGTRVTKDFKEPEVLESV.

Ala-2 is subject to N-acetylalanine; partial.

Belongs to the eukaryotic ribosomal protein eS1 family. Component of the small ribosomal subunit. Mature ribosomes consist of a small (40S) and a large (60S) subunit. The 40S subunit contains about 33 different proteins and 1 molecule of RNA (18S). The 60S subunit contains about 49 different proteins and 3 molecules of RNA (25S, 5.8S and 5S).

Its subcellular location is the cytoplasm. This Coprinopsis cinerea (strain Okayama-7 / 130 / ATCC MYA-4618 / FGSC 9003) (Inky cap fungus) protein is Small ribosomal subunit protein eS1.